We begin with the raw amino-acid sequence, 163 residues long: NAD(P)H-quinone oxidoreductase subunit I, chloroplastic (163 aa).

2 4Fe-4S ferredoxin-type domains span residues 55–84 (GRIH…VDWR) and 95–124 (LNYS…MTEE). [4Fe-4S] cluster contacts are provided by cysteine 64, cysteine 67, cysteine 70, cysteine 74, cysteine 104, cysteine 107, cysteine 110, and cysteine 114.

This sequence belongs to the complex I 23 kDa subunit family. As to quaternary structure, NDH is composed of at least 16 different subunits, 5 of which are encoded in the nucleus. The cofactor is [4Fe-4S] cluster.

It localises to the plastid. It is found in the chloroplast thylakoid membrane. The catalysed reaction is a plastoquinone + NADH + (n+1) H(+)(in) = a plastoquinol + NAD(+) + n H(+)(out). It catalyses the reaction a plastoquinone + NADPH + (n+1) H(+)(in) = a plastoquinol + NADP(+) + n H(+)(out). Functionally, NDH shuttles electrons from NAD(P)H:plastoquinone, via FMN and iron-sulfur (Fe-S) centers, to quinones in the photosynthetic chain and possibly in a chloroplast respiratory chain. The immediate electron acceptor for the enzyme in this species is believed to be plastoquinone. Couples the redox reaction to proton translocation, and thus conserves the redox energy in a proton gradient. The chain is NAD(P)H-quinone oxidoreductase subunit I, chloroplastic (ndhI) from Phoenix dactylifera (Date palm).